The chain runs to 287 residues: Ribosomal RNA small subunit methyltransferase A (287 aa).

S-adenosyl-L-methionine contacts are provided by Asn-28, Leu-30, Gly-55, Glu-77, Asp-103, and Asn-123.

It belongs to the class I-like SAM-binding methyltransferase superfamily. rRNA adenine N(6)-methyltransferase family. RsmA subfamily.

It localises to the cytoplasm. It catalyses the reaction adenosine(1518)/adenosine(1519) in 16S rRNA + 4 S-adenosyl-L-methionine = N(6)-dimethyladenosine(1518)/N(6)-dimethyladenosine(1519) in 16S rRNA + 4 S-adenosyl-L-homocysteine + 4 H(+). Specifically dimethylates two adjacent adenosines (A1518 and A1519) in the loop of a conserved hairpin near the 3'-end of 16S rRNA in the 30S particle. May play a critical role in biogenesis of 30S subunits. This is Ribosomal RNA small subunit methyltransferase A from Rhodopseudomonas palustris (strain BisA53).